Reading from the N-terminus, the 235-residue chain is Probable transcriptional regulatory protein MPN_478 (235 aa).

This sequence belongs to the TACO1 family.

The protein resides in the cytoplasm. This Mycoplasma pneumoniae (strain ATCC 29342 / M129 / Subtype 1) (Mycoplasmoides pneumoniae) protein is Probable transcriptional regulatory protein MPN_478.